We begin with the raw amino-acid sequence, 54 residues long: uncharacterized protein (54 aa).

The disordered stretch occupies residues 1–54 (MSKKSTPMTKDAASRIQSSAAKSGGDVSSGSFASRAQSAAAINANNTSNSTGKK). Positions 28-54 (SSGSFASRAQSAAAINANNTSNSTGKK) are enriched in low complexity.

This is an uncharacterized protein from Dictyostelium discoideum (Social amoeba).